The following is a 325-amino-acid chain: Heme A synthase (325 aa).

A run of 5 helical transmembrane segments spans residues 6 to 26 (WLAVCILLILSMVSIGGFTRL), 88 to 108 (LVGRILGLVFFIGLVYFFVVG), 116 to 136 (LRLCFALVLGVIQGFVGWYMV), 155 to 175 (LFCASLLFMVLVYEFLSPTVI), and 184 to 204 (LVGCSLMFLLSMQIILGGLVA). His246 contacts heme. The next 3 membrane-spanning stretches (helical) occupy residues 248–268 (MSAFLLTFICLVCLVISFFYD), 275–295 (VFLVASMMLLQMFFGVLTLLF), and 297–317 (IPIDIALLHQIMAFILLGICV). His305 provides a ligand contact to heme.

It belongs to the COX15/CtaA family. Type 2 subfamily. As to quaternary structure, interacts with CtaB. Requires heme b as cofactor.

The protein localises to the cell membrane. It catalyses the reaction Fe(II)-heme o + 2 A + H2O = Fe(II)-heme a + 2 AH2. Its pathway is porphyrin-containing compound metabolism; heme A biosynthesis; heme A from heme O: step 1/1. Catalyzes the conversion of heme O to heme A by two successive hydroxylations of the methyl group at C8. The first hydroxylation forms heme I, the second hydroxylation results in an unstable dihydroxymethyl group, which spontaneously dehydrates, resulting in the formyl group of heme A. The chain is Heme A synthase from Neorickettsia sennetsu (strain ATCC VR-367 / Miyayama) (Ehrlichia sennetsu).